The primary structure comprises 341 residues: Glyceraldehyde-3-phosphate dehydrogenase 3.1 (341 aa).

NAD(+) contacts are provided by residues 13–14, D35, and R85; that span reads RI. Residues 157-159, T188, 217-218, and R240 each bind D-glyceraldehyde 3-phosphate; these read SCT and TG. Residue C158 is the Nucleophile of the active site. Position 322 (N322) interacts with NAD(+).

Belongs to the glyceraldehyde-3-phosphate dehydrogenase family. As to quaternary structure, homotetramer.

Its subcellular location is the cytoplasm. It catalyses the reaction D-glyceraldehyde 3-phosphate + phosphate + NAD(+) = (2R)-3-phospho-glyceroyl phosphate + NADH + H(+). It participates in carbohydrate degradation; glycolysis; pyruvate from D-glyceraldehyde 3-phosphate: step 1/5. In Caenorhabditis briggsae, this protein is Glyceraldehyde-3-phosphate dehydrogenase 3.1.